The primary structure comprises 70 residues: Putative defensin-like protein 73 (70 aa).

Positions 1–29 are cleaved as a signal peptide; the sequence is MNCKIEFMSFLVMTSIVILFLFVSGKVEA. 4 cysteine pairs are disulfide-bonded: C33–C68, C37–C57, C43–C66, and C47–C67.

The protein belongs to the DEFL family.

The protein localises to the secreted. The polypeptide is Putative defensin-like protein 73 (LCR44) (Arabidopsis thaliana (Mouse-ear cress)).